We begin with the raw amino-acid sequence, 359 residues long: Type-1 angiotensin II receptor (359 aa).

Topologically, residues 1 to 25 are extracellular; that stretch reads MVPNYSTEETVKRIHVDCPVSGRHS. Asparagine 4 is a glycosylation site (N-linked (GlcNAc...) asparagine). Aspartate 17 serves as a coordination point for angiotensin II. Intrachain disulfides connect cysteine 18-cysteine 274 and cysteine 101-cysteine 180. Residues 26–55 form a helical membrane-spanning segment; the sequence is YIYIMVPTVYSIIFIIGIFGNSLVVIVIYC. Topologically, residues 56–61 are cytoplasmic; the sequence is YMKLKT. A helical transmembrane segment spans residues 62-89; the sequence is VASIFLLNLALADLCFLITLPLWAAYTA. At 90-98 the chain is on the extracellular side; it reads MEYQWPFGN. A helical transmembrane segment spans residues 99 to 125; that stretch reads CLCKLASAGISFNLYASVFLLTCLSID. Residues 126–141 lie on the Cytoplasmic side of the membrane; that stretch reads RYLAIVHPVKSRIRRT. The chain crosses the membrane as a helical span at residues 142-165; sequence MFVARVTCIVIWLLAGVASLPVII. The Extracellular segment spans residues 166–190; sequence HRNIFFAENLNMTVCGFRYDNNNTT. Arginine 167 contributes to the angiotensin II binding site. Residue asparagine 176 is glycosylated (N-linked (GlcNAc...) asparagine). Residues phenylalanine 182 and tyrosine 184 each contribute to the angiotensin II site. Residues asparagine 187 and asparagine 188 are each glycosylated (N-linked (GlcNAc...) asparagine). The helical transmembrane segment at 191 to 216 threads the bilayer; sequence LRVGLGLSKNLLGFLIPFLIILTSYT. Lysine 199 serves as a coordination point for angiotensin II. At 217–239 the chain is on the cytoplasmic side; it reads LIWKTLKKAYQIQRNKTRNDDIF. The helical transmembrane segment at 240-268 threads the bilayer; that stretch reads KMIVAIVFFFFFSWIPHQVFTFLDVLIQL. Residues 269–278 are Extracellular-facing; that stretch reads HVITDCKITD. A helical transmembrane segment spans residues 279–304; it reads IVDTAMPFTICIAYFNNCLNPFFYVF. At 305–359 the chain is on the cytoplasmic side; it reads FGKNFKKYFLQLIKYIPPNVSTHPSLTTKMSSLSYRPPENIRLPTKKTAGSFDAE.

Belongs to the G-protein coupled receptor 1 family. Post-translationally, C-terminal Ser or Thr residues may be phosphorylated.

It localises to the cell membrane. Receptor for angiotensin II, a vasoconstricting peptide, which acts as a key regulator of blood pressure and sodium retention by the kidney. The activated receptor in turn couples to G-alpha proteins G(q) (GNAQ, GNA11, GNA14 or GNA15) and thus activates phospholipase C and increases the cytosolic Ca(2+) concentrations, which in turn triggers cellular responses such as stimulation of protein kinase C. This Gallus gallus (Chicken) protein is Type-1 angiotensin II receptor (AGTR1).